A 594-amino-acid chain; its full sequence is APOBEC1 complementation factor (594 aa).

RRM domains lie at 56–134 (CEIF…ASVD), 136–218 (CRLF…WAEP), and 231–303 (KILY…LAKP). Residues 360–409 (HFPATKGHLSNRAIIRAPSVREIYMNVPVGAAGVRGLGGRGYLAYTGLGR) are required for nuclear localization. Thr499 carries the post-translational modification Phosphothreonine.

Part of the apolipoprotein B mRNA editing complex with APOBEC1. Interacts with TNPO2; TNPO2 may be responsible for transport of A1CF into the nucleus. Interacts with SYNCRIP. Interacts with CELF2/CUGBP2. Interacts with RBM47. As to expression, widely expressed with highest levels in brain, liver, pancreas, colon and spleen.

The protein resides in the nucleus. The protein localises to the endoplasmic reticulum. It is found in the cytoplasm. In terms of biological role, essential component of the apolipoprotein B mRNA editing enzyme complex which is responsible for the postranscriptional editing of a CAA codon for Gln to a UAA codon for stop in APOB mRNA. Binds to APOB mRNA and is probably responsible for docking the catalytic subunit, APOBEC1, to the mRNA to allow it to deaminate its target cytosine. The complex also protects the edited APOB mRNA from nonsense-mediated decay. This is APOBEC1 complementation factor (A1CF) from Homo sapiens (Human).